Consider the following 338-residue polypeptide: Popeye domain-containing protein 1 (338 aa).

The Extracellular segment spans residues 1–40; that stretch reads MATESILITTLPMDLNSQINNVTFGLNENETLCENWREIH. N-linked (GlcNAc...) asparagine glycans are attached at residues asparagine 21 and asparagine 29. Residues 41-61 form a helical membrane-spanning segment; sequence HLVFHLANTCFAAGLVIPSTL. Residues 62 to 65 are Cytoplasmic-facing; sequence NLHM. Residues 66 to 86 traverse the membrane as a helical segment; the sequence is ILLRGMLCLGCIFFIIWAILF. Residues 87–91 lie on the Extracellular side of the membrane; that stretch reads RCALD. The chain crosses the membrane as a helical span at residues 92-112; sequence IMIWNATFLSMNFMHFIYLVY. Over 113–338 the chain is Cytoplasmic; it reads KKRPIKIEKD…VGPLSHAVFC (226 aa).

The protein belongs to the popeye family.

Its subcellular location is the lateral cell membrane. It localises to the cell junction. The protein localises to the tight junction. The protein resides in the membrane. It is found in the cell membrane. Its subcellular location is the sarcolemma. It localises to the caveola. Functionally, cell adhesion molecule involved in the establishment and/or maintenance of cell integrity. May play a role in vamp3-mediated vesicular transport and recycling of different receptor molecules. May be involved in the formation and regulation of the tight junction (TJ) paracellular permeability barrier in epithelial cells. May induce primordial adhesive contact and aggregation of epithelial cells in a Ca(2+)-independent manner. May be involved in epithelial movement during corneal sheet formation and regeneration. May play a role in the regulation of cell shape and movement by modulating the Rho-GTPase activity. May be involved in skeletal muscle and heart development as well as in the maintenance of heart function. May also be involved in striated muscle regeneration and in the regulation of cell spreading. In Xenopus tropicalis (Western clawed frog), this protein is Popeye domain-containing protein 1 (popdc1).